Reading from the N-terminus, the 335-residue chain is S-adenosylmethionine:tRNA ribosyltransferase-isomerase (335 aa).

This sequence belongs to the QueA family. In terms of assembly, monomer.

The protein localises to the cytoplasm. It carries out the reaction 7-aminomethyl-7-carbaguanosine(34) in tRNA + S-adenosyl-L-methionine = epoxyqueuosine(34) in tRNA + adenine + L-methionine + 2 H(+). Its pathway is tRNA modification; tRNA-queuosine biosynthesis. Its function is as follows. Transfers and isomerizes the ribose moiety from AdoMet to the 7-aminomethyl group of 7-deazaguanine (preQ1-tRNA) to give epoxyqueuosine (oQ-tRNA). This is S-adenosylmethionine:tRNA ribosyltransferase-isomerase from Thermotoga petrophila (strain ATCC BAA-488 / DSM 13995 / JCM 10881 / RKU-1).